The primary structure comprises 101 residues: Putative pterin-4-alpha-carbinolamine dehydratase (101 aa).

Belongs to the pterin-4-alpha-carbinolamine dehydratase family.

It catalyses the reaction (4aS,6R)-4a-hydroxy-L-erythro-5,6,7,8-tetrahydrobiopterin = (6R)-L-erythro-6,7-dihydrobiopterin + H2O. In Rhizobium etli (strain ATCC 51251 / DSM 11541 / JCM 21823 / NBRC 15573 / CFN 42), this protein is Putative pterin-4-alpha-carbinolamine dehydratase.